The following is a 933-amino-acid chain: Isoleucine--tRNA ligase (933 aa).

The 'HIGH' region motif lies at 57–67; the sequence is PYANGNIHVGH. E554 contacts L-isoleucyl-5'-AMP. Residues 595–599 carry the 'KMSKS' region motif; that stretch reads KMSKS. K598 contacts ATP.

Belongs to the class-I aminoacyl-tRNA synthetase family. IleS type 1 subfamily. As to quaternary structure, monomer.

Its subcellular location is the cytoplasm. The enzyme catalyses tRNA(Ile) + L-isoleucine + ATP = L-isoleucyl-tRNA(Ile) + AMP + diphosphate. Functionally, catalyzes the attachment of isoleucine to tRNA(Ile). As IleRS can inadvertently accommodate and process structurally similar amino acids such as valine, to avoid such errors it has two additional distinct tRNA(Ile)-dependent editing activities. One activity is designated as 'pretransfer' editing and involves the hydrolysis of activated Val-AMP. The other activity is designated 'posttransfer' editing and involves deacylation of mischarged Val-tRNA(Ile). The sequence is that of Isoleucine--tRNA ligase from Streptococcus pyogenes serotype M1.